The chain runs to 450 residues: Glucose-6-phosphate isomerase (450 aa).

The active-site Proton donor is E290. Active-site residues include H311 and K425.

It belongs to the GPI family.

It is found in the cytoplasm. The enzyme catalyses alpha-D-glucose 6-phosphate = beta-D-fructose 6-phosphate. It functions in the pathway carbohydrate biosynthesis; gluconeogenesis. The protein operates within carbohydrate degradation; glycolysis; D-glyceraldehyde 3-phosphate and glycerone phosphate from D-glucose: step 2/4. Catalyzes the reversible isomerization of glucose-6-phosphate to fructose-6-phosphate. In Lactiplantibacillus plantarum (strain ATCC BAA-793 / NCIMB 8826 / WCFS1) (Lactobacillus plantarum), this protein is Glucose-6-phosphate isomerase.